The primary structure comprises 144 residues: Austinoid biosynthesis cluster protein S (144 aa).

This sequence belongs to the trt14 isomerase family. In terms of assembly, homodimer.

It functions in the pathway secondary metabolite biosynthesis; terpenoid biosynthesis. Its function is as follows. Part of the gene cluster that mediates the biosynthesis of calidodehydroaustin, a fungal meroterpenoid. The first step of the pathway is the synthesis of 3,5-dimethylorsellinic acid by the polyketide synthase ausA. 3,5-dimethylorsellinic acid is then prenylated by the polyprenyl transferase ausN. Further epoxidation by the FAD-dependent monooxygenase ausM and cyclization by the probable terpene cyclase ausL lead to the formation of protoaustinoid A. Protoaustinoid A is then oxidized to spiro-lactone preaustinoid A3 by the combined action of the FAD-binding monooxygenases ausB and ausC, and the dioxygenase ausE. Acid-catalyzed keto-rearrangement and ring contraction of the tetraketide portion of preaustinoid A3 by ausJ lead to the formation of preaustinoid A4. The aldo-keto reductase ausK, with the help of ausH, is involved in the next step by transforming preaustinoid A4 into isoaustinone which is in turn hydroxylated by the P450 monooxygenase ausI to form austinolide. The cytochrome P450 monooxygenase ausG modifies austinolide to austinol. Austinol is further acetylated to austin by the O-acetyltransferase ausP, which spontaneously changes to dehydroaustin. The cytochrome P450 monooxygenase ausR then converts dehydroaustin is into 7-dehydrodehydroaustin. The hydroxylation catalyzed by ausR permits the O-acetyltransferase ausQ to add an additional acetyl group to the molecule, leading to the formation of acetoxydehydroaustin. The short chain dehydrogenase ausT catalyzes the reduction of the double bond present between carbon atoms 1 and 2 to convert 7-dehydrodehydroaustin into 1,2-dihydro-7-hydroxydehydroaustin. AusQ catalyzes not only an acetylation reaction but also the addition of the PKS ausV diketide product to 1,2-dihydro-7-hydroxydehydroaustin, forming precalidodehydroaustin. Finally, the iron/alpha-ketoglutarate-dependent dioxygenase converts precalidodehydroaustin into calidodehydroaustin. AusS is necessary for austinoids production and may play a possible function as a regulator. Functionally, may play a possible function as a regulator. The chain is Austinoid biosynthesis cluster protein S from Aspergillus calidoustus.